A 515-amino-acid polypeptide reads, in one-letter code: Signal transduction histidine-protein kinase/phosphatase MprB (515 aa).

Residues 1 to 24 (MTLPPPPSRLKPPRNTSSLSLRWR) are Cytoplasmic-facing. Residues 25-45 (VMLLAMSMVAMVVVLMSVAVY) form a helical membrane-spanning segment. At 46–165 (AVVSRALYDD…TGQVLGRLGT (120 aa)) the chain is on the extracellular side. Residues 166-186 (VLLIVGGVGVAVAAIAGGMVA) form a helical membrane-spanning segment. In terms of domain architecture, HAMP spans 187–239 (RAGLRPVGRLTQAAERVARTDDLRPIPVFGSDELARLTEAFNMMLRALTESRE). Residues 187–515 (RAGLRPVGRL…GKSRSASKEL (329 aa)) lie on the Cytoplasmic side of the membrane. Positions 247–467 (DAGHELRTPL…SFYVMLPGRP (221 aa)) constitute a Histidine kinase domain. His-250 carries the post-translational modification Phosphohistidine; by autocatalysis. The segment at 468–515 (LTPGGNGTAPVPAAQFDPDMRSAGSRADRRVIKNTETNGKSRSASKEL) is disordered.

It depends on Mg(2+) as a cofactor. Mn(2+) is required as a cofactor. Post-translationally, autophosphorylated.

It is found in the cell membrane. The enzyme catalyses ATP + protein L-histidine = ADP + protein N-phospho-L-histidine.. Functionally, member of the two-component regulatory system MprB/MprA which contributes to maintaining a balance among several systems involved in stress resistance and is required for establishment and maintenance of persistent infection in the host. In response to environmental signals MprB acts both as a membrane-associated protein kinase that undergoes autophosphorylation and subsequently transfers the phosphate to MprA, and a protein phosphatase that dephosphorylates phospho-MprA. This Mycobacterium sp. (strain KMS) protein is Signal transduction histidine-protein kinase/phosphatase MprB (mprB).